The following is a 309-amino-acid chain: Acetolactate synthase small subunit, mitochondrial (309 aa).

A mitochondrion-targeting transit peptide spans 1 to 24 (MLRSLLQSGHRRVVASSCATMVRC). In terms of domain architecture, ACT spans 79–159 (VLNCLVQNEP…DYTNSEIIKR (81 aa)).

This sequence belongs to the acetolactate synthase small subunit family. As to quaternary structure, the acetolactate synthase complex contains the catalytic regulatory subunit ILV2 and the regulatory small subunit ILV6.

It is found in the mitochondrion. The protein operates within amino-acid biosynthesis; L-isoleucine biosynthesis; L-isoleucine from 2-oxobutanoate: step 1/4. It participates in amino-acid biosynthesis; L-valine biosynthesis; L-valine from pyruvate: step 1/4. In terms of biological role, regulatory subunit of mitochondrial acetolactate synthase, which catalyzes the first of a series of common steps in the biosynthesis of the branched-chain amino acids. Stimulates activity of the acetolactate synthase catalytic subunit ILV2 seven- to tenfold and confers sensitivity to inhibition by valine and activation by ATP. This chain is Acetolactate synthase small subunit, mitochondrial (ILV6), found in Saccharomyces cerevisiae (strain ATCC 204508 / S288c) (Baker's yeast).